Here is a 736-residue protein sequence, read N- to C-terminus: Protein DSF2 (736 aa).

Over residues 1–10 (MNQNLKNTSW) the composition is skewed to polar residues. Disordered stretches follow at residues 1–46 (MNQN…DSQF), 178–208 (SGMKPQMNRNEKDYKYPNLENGNRSTNSPNP), 229–410 (ISDN…SGEN), and 440–461 (FKTASTPQSSTDKKKNSKARPN). Residues 14-24 (IGSDDQERKAN) are compositionally biased toward basic and acidic residues. 2 stretches are compositionally biased toward polar residues: residues 25–46 (SSEVSQSPPPNNSFESSMDSQF) and 197–208 (ENGNRSTNSPNP). Residues 238-256 (NNANSKNNRTTSNNINTST) are compositionally biased toward low complexity. A compositionally biased stretch (polar residues) spans 264-284 (KQSCPNEFTTTQKSNCLYRNG). Composition is skewed to low complexity over residues 285–294 (SSTSTNTSFS), 303–318 (KTQSSFESESSSFSKL), and 335–350 (SNSSTSTITKTNTMTN). A compositionally biased stretch (basic residues) spans 374–385 (KLFKSPRTRAKN). Positions 392-410 (EGSSPIRSATNSLDFSGEN) are enriched in polar residues.

This Saccharomyces cerevisiae (strain ATCC 204508 / S288c) (Baker's yeast) protein is Protein DSF2 (DSF2).